The chain runs to 249 residues: Voltage-gated potassium channel subunit beta-3 (249 aa).

NADP(+) is bound by residues N44, S74, R75, Q100, W129, S130, P131, L132, A133, C134, K140, K150, G209, S211, Q215, and E218.

The protein belongs to the shaker potassium channel beta subunit family. As to quaternary structure, forms heteromultimeric complex with alpha subunits. Interacts with KCNA5 and KCNB2. Strong expression in brain, with highest levels in neocortical and allocortical regions, hippocampus, olfactory bulb and cerebellum. Also strong in kidney. Weak expression in lung, skeletal muscle and heart.

The protein localises to the cytoplasm. Regulatory subunit of the voltage-gated potassium (Kv) channels composed of pore-forming and potassium-conducting alpha subunits and of regulatory beta subunit. The beta-3/KCNAB3 subunit may mediate closure of potassium channels. Enhances the expression of Kv2.2/KCNB2 alpha subunit-containing Kv channels but not Kv2.1/KCNB1. May display nicotinamide adenine dinucleotide phosphate (NADPH)-dependent aldoketoreductase activity. The binding of oxidized and reduced NADP(H) cofactors may be required for the regulation of potassium channel activity. In Mus musculus (Mouse), this protein is Voltage-gated potassium channel subunit beta-3.